Here is a 456-residue protein sequence, read N- to C-terminus: 5-hydroxytryptamine receptor 3E (456 aa).

The N-terminal stretch at 1–25 (MEGSWFHRKRFSFYLLLGFLLQGRG) is a signal peptide. Topologically, residues 26-248 (VTFTINCSGF…FYVAIRRRPS (223 aa)) are extracellular. Cysteines 162 and 176 form a disulfide. Asn175 is a glycosylation site (N-linked (GlcNAc...) asparagine). A helical transmembrane segment spans residues 249–269 (LYVINLLVPSGFLVAIDALSF). Over 270–282 (YLPVKSGNRVPFK) the chain is Cytoplasmic. The chain crosses the membrane as a helical span at residues 283–303 (ITLLLGYNVFLLMMSDLLPTS). The Extracellular segment spans residues 304-307 (GTPL). Residues 308–328 (IGVYFALCLSLMVGSLLETIF) form a helical membrane-spanning segment. The Cytoplasmic segment spans residues 329-433 (ITHLLHVATT…WLQFSHAMDA (105 aa)). The tract at residues 401 to 432 (TGGSEWTRAQREHEAQKQHSVELWLQFSHAMD) is HA-stretch; determines single-channel conductance in 5-HT3 receptors. The chain crosses the membrane as a helical span at residues 434–454 (MLFRLYLLFMASSIITVICLW). Topologically, residues 455–456 (NT) are extracellular.

This sequence belongs to the ligand-gated ion channel (TC 1.A.9) family. 5-hydroxytryptamine receptor (TC 1.A.9.2) subfamily. HTR3E sub-subfamily. Forms homopentameric as well as heteropentameric serotonin-activated cation-selective channel complexes with HTR3A. The homomeric complex is not functional. Heteropentameric complexes display properties which resemble that of neuronal serotonin-activated channels in vivo. In terms of tissue distribution, expressed in adult colon and intestine.

It localises to the postsynaptic cell membrane. It is found in the cell membrane. The enzyme catalyses Na(+)(in) = Na(+)(out). The catalysed reaction is K(+)(in) = K(+)(out). It carries out the reaction Ca(2+)(in) = Ca(2+)(out). Forms serotonin (5-hydroxytryptamine/5-HT3)-activated cation-selective channel complexes, which when activated cause fast, depolarizing responses in neurons. The sequence is that of 5-hydroxytryptamine receptor 3E from Homo sapiens (Human).